The sequence spans 164 residues: FMN reductase (NADH) RutF (164 aa).

The protein belongs to the non-flavoprotein flavin reductase family. RutF subfamily.

The enzyme catalyses FMNH2 + NAD(+) = FMN + NADH + 2 H(+). Functionally, catalyzes the reduction of FMN to FMNH2 which is used to reduce pyrimidine by RutA via the Rut pathway. This chain is FMN reductase (NADH) RutF, found in Klebsiella variicola (strain At-22).